Here is a 639-residue protein sequence, read N- to C-terminus: Extracellular metalloproteinase NpIII (639 aa).

The signal sequence occupies residues M1–V16. Positions C17 to E245 are excised as a propeptide. N287, N320, N336, and N368 each carry an N-linked (GlcNAc...) asparagine glycan. H429 provides a ligand contact to Zn(2+). E430 is an active-site residue. Zn(2+) is bound at residue H433. N509 is a glycosylation site (N-linked (GlcNAc...) asparagine).

It belongs to the peptidase M36 family. Requires Zn(2+) as cofactor.

The protein resides in the secreted. Secreted metalloproteinase that allows assimilation of proteinaceous substrates. This is Extracellular metalloproteinase NpIII (NpIII) from Aspergillus oryzae (strain ATCC 42149 / RIB 40) (Yellow koji mold).